Reading from the N-terminus, the 381-residue chain is N-acetylglucosamine-6-phosphate deacetylase (381 aa).

Glu129 is an a divalent metal cation binding site. 140-141 (VH) is a substrate binding site. A divalent metal cation contacts are provided by His193 and His214. Residues 217–218 (NA), Arg226, and 246–249 (DGVH) each bind substrate. Asp271 serves as the catalytic Proton donor/acceptor. Position 306 to 308 (306 to 308 (IAG)) interacts with substrate.

This sequence belongs to the metallo-dependent hydrolases superfamily. NagA family. In terms of assembly, homotetramer. A divalent metal cation serves as cofactor.

The enzyme catalyses N-acetyl-D-glucosamine 6-phosphate + H2O = D-glucosamine 6-phosphate + acetate. Its pathway is amino-sugar metabolism; N-acetylneuraminate degradation; D-fructose 6-phosphate from N-acetylneuraminate: step 4/5. Involved in the first committed step in the biosynthesis of amino-sugar-nucleotides. Catalyzes the hydrolysis of the N-acetyl group of N-acetylglucosamine-6-phosphate (GlcNAc-6-P) to yield glucosamine 6-phosphate and acetate. This chain is N-acetylglucosamine-6-phosphate deacetylase (nagA), found in Haemophilus influenzae (strain ATCC 51907 / DSM 11121 / KW20 / Rd).